A 248-amino-acid chain; its full sequence is Probable transcriptional regulatory protein PSPPH_3775 (248 aa).

This sequence belongs to the TACO1 family.

It localises to the cytoplasm. The protein is Probable transcriptional regulatory protein PSPPH_3775 of Pseudomonas savastanoi pv. phaseolicola (strain 1448A / Race 6) (Pseudomonas syringae pv. phaseolicola (strain 1448A / Race 6)).